The primary structure comprises 56 residues: Large ribosomal subunit protein bL33 (56 aa).

Belongs to the bacterial ribosomal protein bL33 family.

This chain is Large ribosomal subunit protein bL33, found in Glaesserella parasuis serovar 5 (strain SH0165) (Haemophilus parasuis).